A 463-amino-acid polypeptide reads, in one-letter code: Argininosuccinate lyase (463 aa).

It belongs to the lyase 1 family. Argininosuccinate lyase subfamily.

Its subcellular location is the cytoplasm. It carries out the reaction 2-(N(omega)-L-arginino)succinate = fumarate + L-arginine. Its pathway is amino-acid biosynthesis; L-arginine biosynthesis; L-arginine from L-ornithine and carbamoyl phosphate: step 3/3. The sequence is that of Argininosuccinate lyase from Streptococcus pneumoniae serotype 2 (strain D39 / NCTC 7466).